A 164-amino-acid polypeptide reads, in one-letter code: Protein SprT (164 aa).

A SprT-like domain is found at 14-156; that stretch reads QQAETFFKRT…LCRRCREPLV (143 aa). His69 serves as a coordination point for Zn(2+). Residue Glu70 is part of the active site. His73 contributes to the Zn(2+) binding site.

It belongs to the SprT family. Zn(2+) is required as a cofactor.

The protein localises to the cytoplasm. This chain is Protein SprT, found in Pseudomonas savastanoi pv. phaseolicola (strain 1448A / Race 6) (Pseudomonas syringae pv. phaseolicola (strain 1448A / Race 6)).